The primary structure comprises 84 residues: U-scoloptoxin(10)-Er1a (84 aa).

The first 24 residues, 1–24 (MSRFCLLFVAFGFVLYFLHMEVTG), serve as a signal peptide directing secretion.

The protein belongs to the scoloptoxin-10 family. Contains 3 disulfide bonds. In terms of tissue distribution, expressed by the venom gland.

It localises to the secreted. The sequence is that of U-scoloptoxin(10)-Er1a from Ethmostigmus rubripes (Giant centipede).